A 354-amino-acid chain; its full sequence is UDP-3-O-acylglucosamine N-acyltransferase (354 aa).

The active-site Proton acceptor is the H257. A disordered region spans residues 335-354 (AQQVSKSKLRGRNPGGKQND).

Belongs to the transferase hexapeptide repeat family. LpxD subfamily. Homotrimer.

It carries out the reaction a UDP-3-O-[(3R)-3-hydroxyacyl]-alpha-D-glucosamine + a (3R)-hydroxyacyl-[ACP] = a UDP-2-N,3-O-bis[(3R)-3-hydroxyacyl]-alpha-D-glucosamine + holo-[ACP] + H(+). It participates in bacterial outer membrane biogenesis; LPS lipid A biosynthesis. Catalyzes the N-acylation of UDP-3-O-acylglucosamine using 3-hydroxyacyl-ACP as the acyl donor. Is involved in the biosynthesis of lipid A, a phosphorylated glycolipid that anchors the lipopolysaccharide to the outer membrane of the cell. This Rhizobium etli (strain ATCC 51251 / DSM 11541 / JCM 21823 / NBRC 15573 / CFN 42) protein is UDP-3-O-acylglucosamine N-acyltransferase.